Reading from the N-terminus, the 337-residue chain is Phenylalanine--tRNA ligase alpha subunit (337 aa).

Glutamate 258 contributes to the Mg(2+) binding site.

This sequence belongs to the class-II aminoacyl-tRNA synthetase family. Phe-tRNA synthetase alpha subunit type 1 subfamily. As to quaternary structure, tetramer of two alpha and two beta subunits. It depends on Mg(2+) as a cofactor.

Its subcellular location is the cytoplasm. The catalysed reaction is tRNA(Phe) + L-phenylalanine + ATP = L-phenylalanyl-tRNA(Phe) + AMP + diphosphate + H(+). The chain is Phenylalanine--tRNA ligase alpha subunit from Burkholderia thailandensis (strain ATCC 700388 / DSM 13276 / CCUG 48851 / CIP 106301 / E264).